We begin with the raw amino-acid sequence, 206 residues long: Small ribosomal subunit protein uS4 (206 aa).

The region spanning 98–161 is the S4 RNA-binding domain; it reads RRLDNVVYRL…RSMELIKNNL (64 aa).

Belongs to the universal ribosomal protein uS4 family. As to quaternary structure, part of the 30S ribosomal subunit. Contacts protein S5. The interaction surface between S4 and S5 is involved in control of translational fidelity.

In terms of biological role, one of the primary rRNA binding proteins, it binds directly to 16S rRNA where it nucleates assembly of the body of the 30S subunit. With S5 and S12 plays an important role in translational accuracy. This Caldanaerobacter subterraneus subsp. tengcongensis (strain DSM 15242 / JCM 11007 / NBRC 100824 / MB4) (Thermoanaerobacter tengcongensis) protein is Small ribosomal subunit protein uS4.